The sequence spans 220 residues: dITP/XTP pyrophosphatase (220 aa).

13 to 18 (SHNAGK) is a substrate binding site. Positions 45 and 74 each coordinate Mg(2+). D74 acts as the Proton acceptor in catalysis. Substrate is bound by residues S75, 163–166 (FGYD), K186, and 199–200 (HR).

This sequence belongs to the HAM1 NTPase family. As to quaternary structure, homodimer. The cofactor is Mg(2+).

The enzyme catalyses XTP + H2O = XMP + diphosphate + H(+). It carries out the reaction dITP + H2O = dIMP + diphosphate + H(+). It catalyses the reaction ITP + H2O = IMP + diphosphate + H(+). Its function is as follows. Pyrophosphatase that catalyzes the hydrolysis of nucleoside triphosphates to their monophosphate derivatives, with a high preference for the non-canonical purine nucleotides XTP (xanthosine triphosphate), dITP (deoxyinosine triphosphate) and ITP. Seems to function as a house-cleaning enzyme that removes non-canonical purine nucleotides from the nucleotide pool, thus preventing their incorporation into DNA/RNA and avoiding chromosomal lesions. In Mesorhizobium japonicum (strain LMG 29417 / CECT 9101 / MAFF 303099) (Mesorhizobium loti (strain MAFF 303099)), this protein is dITP/XTP pyrophosphatase.